Consider the following 334-residue polypeptide: Cathepsin J (334 aa).

Residues 1-17 form the signal peptide; that stretch reads MTPAVFLVILCFGVASG. Positions 18–113 are cleaved as a propeptide — activation peptide; it reads APARDPNLDA…PSAQKQVSIG (96 aa). Cys-138 is a catalytic residue. 3 N-linked (GlcNAc...) asparagine glycosylation sites follow: Asn-217, Asn-221, and Asn-268. The cysteines at positions 269 and 322 are disulfide-linked. Residue His-276 is part of the active site. Asn-288 carries an N-linked (GlcNAc...) asparagine glycan. Asn-300 is an active-site residue.

Belongs to the peptidase C1 family. As to expression, expressed specifically in placenta.

Its subcellular location is the lysosome. The protein is Cathepsin J (Ctsj) of Rattus norvegicus (Rat).